A 558-amino-acid chain; its full sequence is MESQRSFFIIVFLIVSFILWKIWDDEHHINLLNIENNHSTLQPYSIQSHESNQNTPITHTNNPYSHIITIKTDVFLLKINTYSGNIEEAYLNNYQENLNSQKPLKLLHTSKENKYQAYIDIETLNEYFTNDLNQKNKKHYLYYSNTTNQCEYILKNNENKLQFDLTYQGPNNIIYTKRYLLNRNDYSIYITYIIDNQSTYPIHIKLYGNLIQSIHSDVIQSKHNDHCPLYTYQEAAYSTDTEKYQKYNLKDIKHTNLNIHSTNGWIALLQKYFIIALLPITPKDNTFYTTYLNNHDISIGFKSDFIHIPPGKKNELQSILWMGPKIQDNMKLVAPNLDLVIDYGWLWFISHPLFKLLQFIHTYTIDNWGISIILITVIIRLIMYPLTKAQYTSMAKIRMLQPKLISIQEEYKHDKYQYHQKTIELYKKEKVNPLGGCLPLLIQMPIFLALYYMLSESVELRHAKFAFWIKDLSDQDPYYILPIIMGITMFFIQKLSPTTITDPIQKKIMNIMLVIFTIFFLWFPSGLVLYYIISNIITIIQQQVIYHDLSKKGLHNKK.

Transmembrane regions (helical) follow at residues 6–26 (SFFI…WDDE), 359–379 (FIHT…TVII), 434–454 (LGGC…YYML), 480–500 (ILPI…PTTI), and 513–533 (LVIF…YYII).

Belongs to the OXA1/ALB3/YidC family. Type 1 subfamily. Interacts with the Sec translocase complex via SecD. Specifically interacts with transmembrane segments of nascent integral membrane proteins during membrane integration.

Its subcellular location is the cell inner membrane. Required for the insertion and/or proper folding and/or complex formation of integral membrane proteins into the membrane. Involved in integration of membrane proteins that insert both dependently and independently of the Sec translocase complex, as well as at least some lipoproteins. Aids folding of multispanning membrane proteins. This Blochmanniella floridana protein is Membrane protein insertase YidC.